The chain runs to 549 residues: Glucoamylase, intracellular sporulation-specific (549 aa).

Residue Trp-198 coordinates substrate. The Proton acceptor role is filled by Asp-261. Glu-264 functions as the Proton donor in the catalytic mechanism.

This sequence belongs to the glycosyl hydrolase 15 family.

It catalyses the reaction Hydrolysis of terminal (1-&gt;4)-linked alpha-D-glucose residues successively from non-reducing ends of the chains with release of beta-D-glucose.. In Saccharomyces cerevisiae (strain ATCC 204508 / S288c) (Baker's yeast), this protein is Glucoamylase, intracellular sporulation-specific (SGA1).